The chain runs to 223 residues: Deoxyribose-phosphate aldolase (223 aa).

Aspartate 89 (proton donor/acceptor) is an active-site residue. Lysine 154 acts as the Schiff-base intermediate with acetaldehyde in catalysis. Lysine 183 functions as the Proton donor/acceptor in the catalytic mechanism.

It belongs to the DeoC/FbaB aldolase family. DeoC type 1 subfamily.

The protein localises to the cytoplasm. The enzyme catalyses 2-deoxy-D-ribose 5-phosphate = D-glyceraldehyde 3-phosphate + acetaldehyde. It participates in carbohydrate degradation; 2-deoxy-D-ribose 1-phosphate degradation; D-glyceraldehyde 3-phosphate and acetaldehyde from 2-deoxy-alpha-D-ribose 1-phosphate: step 2/2. In terms of biological role, catalyzes a reversible aldol reaction between acetaldehyde and D-glyceraldehyde 3-phosphate to generate 2-deoxy-D-ribose 5-phosphate. This Thermoanaerobacter sp. (strain X514) protein is Deoxyribose-phosphate aldolase.